Consider the following 620-residue polypeptide: Tyrosine-protein kinase ITK/TSK (620 aa).

The PH domain occupies Phe4–Arg111. The Btk-type zinc finger occupies Asn113–Thr149. Zn(2+) contacts are provided by His121, Cys132, Cys133, and Cys143. One can recognise an SH3 domain in the interval Pro171–Pro231. The residue at position 180 (Tyr180) is a Phosphotyrosine; by autocatalysis. The 100-residue stretch at Trp239 to Val338 folds into the SH2 domain. The 253-residue stretch at Leu363–Ile615 folds into the Protein kinase domain. Residues Ile369–Val377 and Lys391 each bind ATP. Asp482 serves as the catalytic Proton acceptor. Tyr512 is modified (phosphotyrosine; by LCK). Ser565 bears the Phosphoserine mark.

It belongs to the protein kinase superfamily. Tyr protein kinase family. TEC subfamily. In terms of assembly, homooligomerizes; this association negatively regulates kinase activity. Interacts with PPIA/CYPA; this interaction regulates TCR signal strength via a proline-directed conformational switch in ITK. Interacts with THEMIS. Interacts with FASLG. Interacts with VAV1; this interaction is important for VAV1 localization and TCR-induced actin polarization. Interacts with TBX21. Zn(2+) serves as cofactor. In terms of processing, phosphorylated at Tyr-512 in the activation loop of the kinase domain by LCK. Subsequent autophosphorylation at Tyr-180 leads to the kinase activation. The autophosphorylated Tyr-180 lies within the substrate binding sequence of the SH3 domain. Ubiquitinated. T-cell lines and natural killer cell lines.

The protein localises to the cytoplasm. Its subcellular location is the nucleus. It catalyses the reaction L-tyrosyl-[protein] + ATP = O-phospho-L-tyrosyl-[protein] + ADP + H(+). Its function is as follows. Tyrosine kinase that plays an essential role in regulation of the adaptive immune response. Regulates the development, function and differentiation of conventional T-cells and nonconventional NKT-cells. When antigen presenting cells (APC) activate T-cell receptor (TCR), a series of phosphorylation lead to the recruitment of ITK to the cell membrane, in the vicinity of the stimulated TCR receptor, where it is phosphorylated by LCK. Phosphorylation leads to ITK autophosphorylation and full activation. Once activated, phosphorylates PLCG1, leading to the activation of this lipase and subsequent cleavage of its substrates. In turn, the endoplasmic reticulum releases calcium in the cytoplasm and the nuclear activator of activated T-cells (NFAT) translocates into the nucleus to perform its transcriptional duty. Phosphorylates 2 essential adapter proteins: the linker for activation of T-cells/LAT protein and LCP2. Then, a large number of signaling molecules such as VAV1 are recruited and ultimately lead to lymphokine production, T-cell proliferation and differentiation. Required for TCR-mediated calcium response in gamma-delta T-cells, may also be involved in the modulation of the transcriptomic signature in the Vgamma2-positive subset of immature gamma-delta T-cells. Phosphorylates TBX21 at 'Tyr-530' and mediates its interaction with GATA3. This Homo sapiens (Human) protein is Tyrosine-protein kinase ITK/TSK (ITK).